Reading from the N-terminus, the 519-residue chain is Flavin-dependent halogenase rdc2 (519 aa).

The first 21 residues, Met1 to Ala21, serve as a signal peptide directing secretion. Gly14, Ala17, and Glu47 together coordinate FAD. Chloride is bound by residues Ser324 and Gly325.

It belongs to the flavin-dependent halogenase family.

Its pathway is secondary metabolite biosynthesis. Functionally, flavin-dependent halogenase; part of the gene cluster that mediates the biosynthesis of radicicol, a resorcylic acid lactone (RAL) that irreversibly inhibits the HSP90 molecular chaperone, an important target for cancer chemotherapy. Within the cluster, rdc2 is involved in the chlorination of the resorcylic acid lactone (RAL) structure to convert monocillin I into radicicol. Also chlorinates monocillin II to produce 6-cholomonocillin II and monocilllin IV to produce 13-chloromonocillin IV. In contrast to most fungal halogenases, rdc2 has a broad substrate specificity and can accept a variety of macrolactones as the substrates to generate chlorinated derivatives, including dihydroresorcylide, zearalenone, curvularin, or even curcumin. Rdc2 is able to dichlorinate dihydroresorcylide and monocillin IV. Dihydroresorcylide is first chlorinated at position 11 to produce 11-chlorodihydroresorcylide which can be further chlorinated by rdc2 at possition 13. Mororeover, rdc2 can incorporate bromine into dihydroresorcylide to yield the corresponding mono- and di-brominated derivatives. Finally, rdc2 is also able to halogenate the isoquinolines 4-hydroxyisoquinoline and 6-hydroxyisoquinoline into 3-chloro-4-hydroxyisoquinoline and 5-chloro-6-hydroxyisoquinoline, respectively. The radicicol cluster encodes only two apparent post-PKS enzymes, a cytochrome P450 monooxygenase (rdc4) and a non-heme halogenase (rdc2) that could introduce the epoxide and the chlorine, respectively. If this cluster includes all the genes required for radicicol biosynthesis, the remaining structural features of radicicol are presumably generated by the PKSs rdc1 and rdc5. The C-2' ketone could arise if the R-PKS rdc5 and NR-PKS rdc1 each carry out four iterations, in contrast to the five iteration-three iteration split for the hypothemycin PKSs. The origin of the cis 5',6' double bond is not known. The radicicol R-PKS rdc5 ER domain may catalyze either double bond isomerization or reduction in the third iteration. The polypeptide is Flavin-dependent halogenase rdc2 (Metacordyceps chlamydosporia (Nematophagous fungus)).